Consider the following 632-residue polypeptide: Phosphoglucomutase, chloroplastic (632 aa).

Residues 1–72 (MAMESALTST…PSSPSTSVAQ (72 aa)) constitute a chloroplast transit peptide. Alpha-D-glucose 1,6-bisphosphate-binding residues include R97 and S190. S190 acts as the Phosphoserine intermediate in catalysis. Residues S190, D355, D357, and D359 each coordinate Mg(2+). The residue at position 190 (S190) is a Phosphoserine. Alpha-D-glucose 1,6-bisphosphate-binding residues include D359, R360, T423, E442, S444, and K455.

The protein belongs to the phosphohexose mutase family. Monomer. Requires Mg(2+) as cofactor.

The protein localises to the plastid. The protein resides in the chloroplast. The enzyme catalyses alpha-D-glucose 1-phosphate = alpha-D-glucose 6-phosphate. The catalysed reaction is O-phospho-L-seryl-[protein] + alpha-D-glucose 1-phosphate = alpha-D-glucose 1,6-bisphosphate + L-seryl-[protein]. It catalyses the reaction alpha-D-glucose 1,6-bisphosphate + L-seryl-[protein] = O-phospho-L-seryl-[protein] + alpha-D-glucose 6-phosphate. With respect to regulation, inhibited by the Calvin cycle intermediates fructose-1,6-bisphosphate and ribulose-1,5-bisphosphate. Its function is as follows. Catalyzes the reversible isomerization of alpha-D-glucose 1-phosphate to alpha-D-glucose 6-phosphate. The mechanism proceeds via the intermediate compound alpha-D-glucose 1,6-bisphosphate. This enzyme participates in both the breakdown and synthesis of glucose. Promotes gravitropic responses, negative in shoots but positive in roots, by facilitating starch granules (statoliths) formation. The protein is Phosphoglucomutase, chloroplastic (PGMP) of Solanum tuberosum (Potato).